We begin with the raw amino-acid sequence, 307 residues long: Pyridoxal 5'-phosphate synthase subunit PdxS (307 aa).

Positions 1–10 (MRGQPRPKLR) are enriched in basic residues. Residues 1-20 (MRGQPRPKLRRMTEQQTGTP) are disordered. Asp37 provides a ligand contact to D-ribose 5-phosphate. The Schiff-base intermediate with D-ribose 5-phosphate role is filled by Lys94. D-ribose 5-phosphate is bound at residue Gly166. Arg178 contributes to the D-glyceraldehyde 3-phosphate binding site. Residues Gly227 and 248 to 249 (GS) each bind D-ribose 5-phosphate.

Belongs to the PdxS/SNZ family. In the presence of PdxT, forms a dodecamer of heterodimers.

The catalysed reaction is aldehydo-D-ribose 5-phosphate + D-glyceraldehyde 3-phosphate + L-glutamine = pyridoxal 5'-phosphate + L-glutamate + phosphate + 3 H2O + H(+). It functions in the pathway cofactor biosynthesis; pyridoxal 5'-phosphate biosynthesis. Functionally, catalyzes the formation of pyridoxal 5'-phosphate from ribose 5-phosphate (RBP), glyceraldehyde 3-phosphate (G3P) and ammonia. The ammonia is provided by the PdxT subunit. Can also use ribulose 5-phosphate and dihydroxyacetone phosphate as substrates, resulting from enzyme-catalyzed isomerization of RBP and G3P, respectively. This Deinococcus radiodurans (strain ATCC 13939 / DSM 20539 / JCM 16871 / CCUG 27074 / LMG 4051 / NBRC 15346 / NCIMB 9279 / VKM B-1422 / R1) protein is Pyridoxal 5'-phosphate synthase subunit PdxS.